A 276-amino-acid chain; its full sequence is Nickel import system permease protein NikC (276 aa).

5 consecutive transmembrane segments (helical) span residues 10–30 (LIFF…FFVS), 73–93 (LFVT…LGLF), 108–128 (FIDV…ASFF), 186–206 (IIPA…LYIS), and 238–258 (IMLI…NLTG). One can recognise an ABC transmembrane type-1 domain in the interval 69–258 (ARSTLFVTVL…ITILIFNLTG (190 aa)).

This sequence belongs to the binding-protein-dependent transport system permease family. OppBC subfamily. The complex is composed of two ATP-binding proteins (NikD and NikE), two transmembrane proteins (NikB and NikC) and a solute-binding protein (NikA).

It localises to the cell membrane. Its function is as follows. Part of the ABC transporter complex NikABCDE (Opp2) involved in nickel import. Probably responsible for the translocation of the substrate across the membrane. The sequence is that of Nickel import system permease protein NikC from Staphylococcus aureus (strain USA300).